The primary structure comprises 267 residues: Ras-related protein Rab-36 (267 aa).

GTP is bound by residues Val-68, Gly-69, Lys-70, Thr-71, Ser-72, Asp-83, Tyr-86, and Thr-89. Thr-71 is a Mg(2+) binding site. Positions 76–94 (RLCKNVFDHDYKATIGVDF) match the Switch 1 motif. Thr-89 and Asp-112 together coordinate Mg(2+). The Switch 2 motif lies at 113-132 (TAGQEKFKCIASAYYRGAQV). The GTP site is built by Gly-115, Lys-172, Asp-174, Ser-203, Ala-204, and Lys-205. S-geranylgeranyl cysteine attachment occurs at residues Cys-266 and Cys-267.

Belongs to the small GTPase superfamily. Rab family. Mg(2+) is required as a cofactor.

It localises to the golgi apparatus membrane. The catalysed reaction is GTP + H2O = GDP + phosphate + H(+). Regulated by guanine nucleotide exchange factors (GEFs) which promote the exchange of bound GDP for free GTP. Regulated by GTPase activating proteins (GAPs) which increase the GTP hydrolysis activity. Inhibited by GDP dissociation inhibitors (GDIs). Functionally, the small GTPases Rab are key regulators of intracellular membrane trafficking, from the formation of transport vesicles to their fusion with membranes. Rabs cycle between an inactive GDP-bound form and an active GTP-bound form that is able to recruit to membranes different sets of downstream effectors directly responsible for vesicle formation, movement, tethering and fusion. This is Ras-related protein Rab-36 from Mus musculus (Mouse).